A 398-amino-acid chain; its full sequence is Cholinephosphotransferase 1 (398 aa).

Alanine 2 is modified (N-acetylalanine). At 2-62 (AAGAGARPAP…LLQWIPLWIA (61 aa)) the chain is on the cytoplasmic side. The helical transmembrane segment at 63–83 (PNTITLFGLAINLFTTLVLIF) threads the bilayer. Residue asparagine 64 coordinates CDP-choline. Residues 84-93 (YCPTVTEEAP) are Lumenal-facing. A helical membrane pass occupies residues 94–118 (YWTYLLCALGLFIYQSLDAIDGKQA). 2 residues coordinate Mg(2+): aspartate 111 and aspartate 114. Arginine 119 contacts CDP-choline. The Cytoplasmic portion of the chain corresponds to 119–125 (RRTNSCS). Residues 126–150 (PLGELFDHGCDSLSTVFMAIGASIA) form a helical membrane-spanning segment. Mg(2+) is bound at residue aspartate 132. Histidine 133 (proton acceptor) is an active-site residue. Aspartate 136 is a Mg(2+) binding site. Residues 151 to 160 (VRLGTHPDWL) are Lumenal-facing. A helical transmembrane segment spans residues 161–179 (FFCSFVGMFMFYCAHWQTY). Residues 180–190 (VSGVLRFGRVD) are Cytoplasmic-facing. The chain crosses the membrane as a helical span at residues 191-207 (VTEIQVALVIVFLLSTF). Residues 208–222 (GGAMMWDYTIPILEI) lie on the Lumenal side of the membrane. The chain crosses the membrane as a helical span at residues 223–248 (KLKILPVLGVVGGLIFSCSNYFHVIL). Residues 249–265 (HGGVGKNGSTIAGTSVL) lie on the Cytoplasmic side of the membrane. Residues 266–281 (SPGLHIGLIIILAIMI) form a helical membrane-spanning segment. At 282-293 (YKKSATNVFEKH) the chain is on the lumenal side. The helical transmembrane segment at 294-316 (PCLYTLMFGCVFAKVAQKLVIAH) threads the bilayer. Topologically, residues 317–329 (MTKSELYLQDTVF) are cytoplasmic. Residues 330-339 (IGPGLLFLDQ) form a helical membrane-spanning segment. Topologically, residues 340 to 346 (YFNNFID) are lumenal. A helical transmembrane segment spans residues 347 to 376 (EYVVLWIAMVITSFDMMIYFSSLCLQISRH). Residues 377–398 (LHLSIFKTSYQQAPEQVHKHID) lie on the Cytoplasmic side of the membrane.

This sequence belongs to the CDP-alcohol phosphatidyltransferase class-I family. Mg(2+) is required as a cofactor. The cofactor is Mn(2+).

Its subcellular location is the golgi apparatus membrane. It carries out the reaction CDP-choline + a 1,2-diacyl-sn-glycerol = a 1,2-diacyl-sn-glycero-3-phosphocholine + CMP + H(+). It catalyses the reaction 1-octadecanoyl-2-(5Z,8Z,11Z,14Z-eicosatetraenoyl)-sn-glycerol + CDP-choline = 1-octadecanoyl-2-(5Z,8Z,11Z,14Z-eicosatetraenoyl)-sn-glycero-3-phosphocholine + CMP + H(+). The enzyme catalyses 1-hexadecanoyl-2-(9Z-octadecenoyl)-sn-glycerol + CDP-choline = 1-hexadecanoyl-2-(9Z-octadecenoyl)-sn-glycero-3-phosphocholine + CMP + H(+). The catalysed reaction is 1-hexadecanoyl-2-(4Z,7Z,10Z,13Z,16Z,19Z-docosahexaenoyl)-sn-glycerol + CDP-choline = 1-hexadecanoyl-2-(4Z,7Z,10Z,13Z,16Z,19Z-docosahexaenoyl)-sn-glycero-3-phosphocholine + CMP + H(+). It carries out the reaction 1,2-dioctanoyl-sn-glycerol + CDP-choline = 1,2-dioctanoyl-sn-glycero-3-phosphocholine + CMP + H(+). The protein operates within phospholipid metabolism; phosphatidylcholine biosynthesis; phosphatidylcholine from phosphocholine: step 2/2. In terms of biological role, catalyzes the final step of de novo phosphatidylcholine (PC) synthesis, i.e. the transfer of choline phosphate from CDP-choline to the free hydroxyl of a diacylglycerol (DAG), producing a PC. It thereby plays a central role in the formation and maintenance of vesicular membranes. The chain is Cholinephosphotransferase 1 from Rattus norvegicus (Rat).